Consider the following 619-residue polypeptide: ESX-2 secretion system protein EccA2 (619 aa).

Residue 373–380 (GPPGTGKT) coordinates ATP.

Belongs to the CbxX/CfxQ family. As to quaternary structure, part of the ESX-2 / type VII secretion system (T7SS), which is composed of cytosolic and membrane components. Residues 522-619 interact with an artificial EsxB-EsxA heterodimer from the adjacent ESX-1 locus.

Its subcellular location is the cytoplasm. Shows ATPase activity. Could provide energy for export of ESX-2 substrates. In Mycobacterium tuberculosis (strain ATCC 25618 / H37Rv), this protein is ESX-2 secretion system protein EccA2 (eccA2).